Here is a 286-residue protein sequence, read N- to C-terminus: Pantothenate synthetase (286 aa).

Residue 30–37 (MGFLHEGH) participates in ATP binding. The active-site Proton donor is histidine 37. A (R)-pantoate-binding site is contributed by glutamine 61. Glutamine 61 is a beta-alanine binding site. An ATP-binding site is contributed by 147–150 (GLKD). A (R)-pantoate-binding site is contributed by glutamine 153. ATP is bound by residues valine 176 and 184–187 (KSSR).

Belongs to the pantothenate synthetase family. In terms of assembly, homodimer.

Its subcellular location is the cytoplasm. It catalyses the reaction (R)-pantoate + beta-alanine + ATP = (R)-pantothenate + AMP + diphosphate + H(+). It participates in cofactor biosynthesis; (R)-pantothenate biosynthesis; (R)-pantothenate from (R)-pantoate and beta-alanine: step 1/1. Catalyzes the condensation of pantoate with beta-alanine in an ATP-dependent reaction via a pantoyl-adenylate intermediate. This is Pantothenate synthetase from Bacillus subtilis (strain 168).